Reading from the N-terminus, the 121-residue chain is MERLKSHRDFVAVLKRRRRVSREDIVVHYLMHDDVVTGDTATVQGRRVGLAVSKAVGNAVTRNAVKRRFRVLARKYESLLPESCDIVLRAKPSAARADFLSLEQQMASCFEAVKRKTASRQ.

This sequence belongs to the RnpA family. Consists of a catalytic RNA component (M1 or rnpB) and a protein subunit.

It catalyses the reaction Endonucleolytic cleavage of RNA, removing 5'-extranucleotides from tRNA precursor.. Functionally, RNaseP catalyzes the removal of the 5'-leader sequence from pre-tRNA to produce the mature 5'-terminus. It can also cleave other RNA substrates such as 4.5S RNA. The protein component plays an auxiliary but essential role in vivo by binding to the 5'-leader sequence and broadening the substrate specificity of the ribozyme. The sequence is that of Ribonuclease P protein component from Bifidobacterium adolescentis (strain ATCC 15703 / DSM 20083 / NCTC 11814 / E194a).